A 92-amino-acid chain; its full sequence is UPF0223 protein SUB0967 (92 aa).

Belongs to the UPF0223 family.

The polypeptide is UPF0223 protein SUB0967 (Streptococcus uberis (strain ATCC BAA-854 / 0140J)).